Here is a 500-residue protein sequence, read N- to C-terminus: NAD(P)H-quinone oxidoreductase chain 4, chloroplastic (500 aa).

The next 14 helical transmembrane spans lie at 4–24 (FPWL…IFFL), 37–57 (ISIC…HFQL), 87–107 (VGSI…AWPV), 113–130 (LFYF…GLFS), 134–154 (LLLF…LLSM), 167–187 (FILY…GMGL), 211–231 (ILLY…IPLH), 242–262 (HYST…YGLI), 272–292 (AHYL…IYAA), 313–333 (MGFI…GAIL), 334–354 (QILS…TASD), 386–406 (LALP…GLIT), 417–437 (LITF…LSML), and 462–482 (LFIL…PDLV).

It belongs to the complex I subunit 4 family.

It localises to the plastid. It is found in the chloroplast thylakoid membrane. The catalysed reaction is a plastoquinone + NADH + (n+1) H(+)(in) = a plastoquinol + NAD(+) + n H(+)(out). The enzyme catalyses a plastoquinone + NADPH + (n+1) H(+)(in) = a plastoquinol + NADP(+) + n H(+)(out). This chain is NAD(P)H-quinone oxidoreductase chain 4, chloroplastic, found in Agrostis stolonifera (Creeping bentgrass).